Here is a 360-residue protein sequence, read N- to C-terminus: S-adenosylmethionine:tRNA ribosyltransferase-isomerase (360 aa).

The protein belongs to the QueA family. As to quaternary structure, monomer.

The protein localises to the cytoplasm. The enzyme catalyses 7-aminomethyl-7-carbaguanosine(34) in tRNA + S-adenosyl-L-methionine = epoxyqueuosine(34) in tRNA + adenine + L-methionine + 2 H(+). Its pathway is tRNA modification; tRNA-queuosine biosynthesis. In terms of biological role, transfers and isomerizes the ribose moiety from AdoMet to the 7-aminomethyl group of 7-deazaguanine (preQ1-tRNA) to give epoxyqueuosine (oQ-tRNA). The sequence is that of S-adenosylmethionine:tRNA ribosyltransferase-isomerase from Rhodopseudomonas palustris (strain TIE-1).